Reading from the N-terminus, the 758-residue chain is 5-methyltetrahydropteroyltriglutamate--homocysteine methyltransferase (758 aa).

5-methyltetrahydropteroyltri-L-glutamate contacts are provided by residues arginine 16–lysine 19 and lysine 112. L-homocysteine is bound by residues isoleucine 433 to serine 435 and glutamate 486. L-methionine-binding positions include isoleucine 433 to serine 435 and glutamate 486. 5-methyltetrahydropteroyltri-L-glutamate is bound by residues arginine 517–cysteine 518 and tryptophan 563. Aspartate 601 is an L-homocysteine binding site. Aspartate 601 contributes to the L-methionine binding site. Glutamate 607 contacts 5-methyltetrahydropteroyltri-L-glutamate. Zn(2+) contacts are provided by histidine 643, cysteine 645, and glutamate 667. Catalysis depends on histidine 696, which acts as the Proton donor. A Zn(2+)-binding site is contributed by cysteine 728.

Belongs to the vitamin-B12 independent methionine synthase family. It depends on Zn(2+) as a cofactor.

The enzyme catalyses 5-methyltetrahydropteroyltri-L-glutamate + L-homocysteine = tetrahydropteroyltri-L-glutamate + L-methionine. The protein operates within amino-acid biosynthesis; L-methionine biosynthesis via de novo pathway; L-methionine from L-homocysteine (MetE route): step 1/1. Catalyzes the transfer of a methyl group from 5-methyltetrahydrofolate to homocysteine resulting in methionine formation. The chain is 5-methyltetrahydropteroyltriglutamate--homocysteine methyltransferase from Neisseria gonorrhoeae (strain ATCC 700825 / FA 1090).